A 204-amino-acid chain; its full sequence is Translation initiation factor 2 subunit beta (204 aa).

Positions 146-204 constitute a TRAM domain; it reads AIEEGKELEVHIESISKKGDGVARIGKYILYVAGTKAGQNVKVRITRISGQVAFTQKIL.

The protein belongs to the eIF-2-beta/eIF-5 family. In terms of assembly, heterotrimer composed of an alpha, a beta and a gamma chain.

Functionally, eIF-2 functions in the early steps of protein synthesis by forming a ternary complex with GTP and initiator tRNA. The protein is Translation initiation factor 2 subunit beta of Methanocorpusculum labreanum (strain ATCC 43576 / DSM 4855 / Z).